Reading from the N-terminus, the 337-residue chain is Anthranilate phosphoribosyltransferase (337 aa).

5-phospho-alpha-D-ribose 1-diphosphate contacts are provided by residues Gly81, Gly84–Asp85, Ser89, Asn91–Thr94, Lys109–Ser117, and Ala121. Gly81 lines the anthranilate pocket. Ser93 contacts Mg(2+). Asn112 contributes to the anthranilate binding site. Arg167 is an anthranilate binding site. Residues Asp226 and Glu227 each contribute to the Mg(2+) site.

The protein belongs to the anthranilate phosphoribosyltransferase family. Homodimer. The cofactor is Mg(2+).

The enzyme catalyses N-(5-phospho-beta-D-ribosyl)anthranilate + diphosphate = 5-phospho-alpha-D-ribose 1-diphosphate + anthranilate. Its pathway is amino-acid biosynthesis; L-tryptophan biosynthesis; L-tryptophan from chorismate: step 2/5. In terms of biological role, catalyzes the transfer of the phosphoribosyl group of 5-phosphorylribose-1-pyrophosphate (PRPP) to anthranilate to yield N-(5'-phosphoribosyl)-anthranilate (PRA). In Bradyrhizobium diazoefficiens (strain JCM 10833 / BCRC 13528 / IAM 13628 / NBRC 14792 / USDA 110), this protein is Anthranilate phosphoribosyltransferase.